The chain runs to 261 residues: ATP synthase subunit a (261 aa).

Transmembrane regions (helical) follow at residues 45–65 (ITNVTMWMAIAVLVIAAILVL), 107–127 (VMTLFLFVLCGNVLGLLPLSF), 133–153 (MAVTVPLALMVFVGVTALGFM), 162–182 (MFWVTSAPLAIRPVLAVIEVI), 209–229 (IAGFASIAVVSPVVVGAVTAI), and 232–252 (LELLVAVVQAYVFTILTCVYL).

This sequence belongs to the ATPase A chain family. As to quaternary structure, F-type ATPases have 2 components, CF(1) - the catalytic core - and CF(0) - the membrane proton channel. CF(1) has five subunits: alpha(3), beta(3), gamma(1), delta(1), epsilon(1). CF(0) has four main subunits: a, b, b' and c.

The protein resides in the cell inner membrane. Functionally, key component of the proton channel; it plays a direct role in the translocation of protons across the membrane. This is ATP synthase subunit a from Cereibacter sphaeroides (strain ATCC 17025 / ATH 2.4.3) (Rhodobacter sphaeroides).